We begin with the raw amino-acid sequence, 146 residues long: Bacterial hemoglobin (146 aa).

Residues 1–138 (MLDQQTINII…IADVFIQVEA (138 aa)) form the Globin domain. Heme b is bound by residues glutamine 53 and histidine 85.

Belongs to the globin family. In terms of assembly, homodimer.

This protein functions as a terminal oxidase. The polypeptide is Bacterial hemoglobin (vhb) (Vitreoscilla stercoraria).